Here is a 731-residue protein sequence, read N- to C-terminus: 1,4-alpha-glucan branching enzyme GlgB (731 aa).

Asp-412 functions as the Nucleophile in the catalytic mechanism. Glu-465 functions as the Proton donor in the catalytic mechanism.

The protein belongs to the glycosyl hydrolase 13 family. GlgB subfamily. As to quaternary structure, monomer.

It catalyses the reaction Transfers a segment of a (1-&gt;4)-alpha-D-glucan chain to a primary hydroxy group in a similar glucan chain.. It participates in glycan biosynthesis; glycogen biosynthesis. Functionally, catalyzes the formation of the alpha-1,6-glucosidic linkages in glycogen by scission of a 1,4-alpha-linked oligosaccharide from growing alpha-1,4-glucan chains and the subsequent attachment of the oligosaccharide to the alpha-1,6 position. This is 1,4-alpha-glucan branching enzyme GlgB from Bordetella parapertussis (strain 12822 / ATCC BAA-587 / NCTC 13253).